Consider the following 932-residue polypeptide: Glycine dehydrogenase (decarboxylating) (932 aa).

At Lys-685 the chain carries N6-(pyridoxal phosphate)lysine.

Belongs to the GcvP family. In terms of assembly, the glycine cleavage system is composed of four proteins: P, T, L and H. Requires pyridoxal 5'-phosphate as cofactor.

It carries out the reaction N(6)-[(R)-lipoyl]-L-lysyl-[glycine-cleavage complex H protein] + glycine + H(+) = N(6)-[(R)-S(8)-aminomethyldihydrolipoyl]-L-lysyl-[glycine-cleavage complex H protein] + CO2. In terms of biological role, the glycine cleavage system catalyzes the degradation of glycine. The P protein binds the alpha-amino group of glycine through its pyridoxal phosphate cofactor; CO(2) is released and the remaining methylamine moiety is then transferred to the lipoamide cofactor of the H protein. The protein is Glycine dehydrogenase (decarboxylating) of Brucella abortus (strain S19).